Reading from the N-terminus, the 694-residue chain is Polyphosphate kinase (694 aa).

Asn45 provides a ligand contact to ATP. Arg367 and Arg397 together coordinate Mg(2+). The active-site Phosphohistidine intermediate is His427. ATP contacts are provided by Tyr460, Arg553, and His580.

Belongs to the polyphosphate kinase 1 (PPK1) family. Mg(2+) serves as cofactor. In terms of processing, an intermediate of this reaction is the autophosphorylated ppk in which a phosphate is covalently linked to a histidine residue through a N-P bond.

It catalyses the reaction [phosphate](n) + ATP = [phosphate](n+1) + ADP. Its function is as follows. Catalyzes the reversible transfer of the terminal phosphate of ATP to form a long-chain polyphosphate (polyP). This chain is Polyphosphate kinase, found in Campylobacter jejuni (strain RM1221).